A 150-amino-acid chain; its full sequence is Transcription antitermination protein NusB (150 aa).

Belongs to the NusB family.

In terms of biological role, involved in transcription antitermination. Required for transcription of ribosomal RNA (rRNA) genes. Binds specifically to the boxA antiterminator sequence of the ribosomal RNA (rrn) operons. This Streptococcus pyogenes serotype M3 (strain ATCC BAA-595 / MGAS315) protein is Transcription antitermination protein NusB.